A 344-amino-acid polypeptide reads, in one-letter code: Follistatin (344 aa).

The N-terminal stretch at 1-29 (MARPRHQPGGLCLLLLLLCQFMEDRSAQA) is a signal peptide. Residues 30–103 (GNCWLRQAKN…TCENVDCGPG (74 aa)) enclose the TB domain. 8 disulfide bridges follow: Cys-32–Cys-55, Cys-42–Cys-88, Cys-56–Cys-91, Cys-95–Cys-106, Cys-100–Cys-116, Cys-118–Cys-150, Cys-122–Cys-143, and Cys-132–Cys-164. The region spanning 94–117 (TCENVDCGPGKKCRMNKKNKPRCV) is the Follistatin-like 1 domain. Kazal-like domains are found at residues 112–166 (NKPR…KCKK), 186–241 (NAYC…KCIK), and 261–318 (KVGR…SCNS). Residue Asn-124 is glycosylated (N-linked (GlcNAc...) asparagine). In terms of domain architecture, Follistatin-like 2 spans 167 to 190 (TCRDVFCPGSSTCVVDQTNNAYCV). 3 disulfides stabilise this stretch: Cys-192-Cys-225, Cys-196-Cys-218, and Cys-207-Cys-239. The 25-residue stretch at 244-268 (SCDDIQCTGGKKCLWDFKVGRGRCS) folds into the Follistatin-like 3 domain. 3 disulfides stabilise this stretch: Cys-270-Cys-302, Cys-274-Cys-295, and Cys-284-Cys-316. Asn-288 carries N-linked (GlcNAc...) asparagine glycosylation. The segment at 316–344 (CNSISEDTEDEEEDEDQDYSFPISSILEW) is disordered. Residues 321-333 (EDTEDEEEDEDQD) show a composition bias toward acidic residues.

Interacts with GDF11. Interacts with activin A/INHBA. Interacts with myostatin/MSTN.

It localises to the secreted. It is found in the nucleus. The protein resides in the nucleolus. Multifunctional regulatory protein whose primary function is to antagonize members of the transforming growth factor beta (TGF-beta) superfamily including activin, myostatin, GDF11 or bone morphogenetic proteins (BMPs). Mechanistically, binds to these ligands in the extracellular space, blocking their type II receptor-binding site to inhibit downstream signaling. Plays an essential role in muscle fiber formation and growth both by preventing the repressive effects of myostatin and through SMAD3/AKT/mTOR signaling independently of myostatin. Also promotes neural differentiation by antagonizing the action BMP4. Acts as a specific inhibitor of the biosynthesis and secretion of pituitary follicle stimulating hormone (FSH) by sequestering activin A/INHBA. On the other hand, translocates into the nucleus where it down-regulates rRNA synthesis and ribosome biogenesis to maintain cellular energy homeostasis by binding to rDNA. This chain is Follistatin, found in Bos taurus (Bovine).